Reading from the N-terminus, the 373-residue chain is Chaperone protein DnaJ (373 aa).

Positions Asp-5–Gly-70 constitute a J domain. The CR-type zinc finger occupies Gly-134–Lys-211. Zn(2+) is bound by residues Cys-147, Cys-150, Cys-163, Cys-166, Cys-185, Cys-188, Cys-199, and Cys-202. 4 CXXCXGXG motif repeats span residues Cys-147 to Gly-154, Cys-163 to Gly-170, Cys-185 to Gly-192, and Cys-199 to Gly-206.

The protein belongs to the DnaJ family. As to quaternary structure, homodimer. It depends on Zn(2+) as a cofactor.

It localises to the cytoplasm. Its function is as follows. Participates actively in the response to hyperosmotic and heat shock by preventing the aggregation of stress-denatured proteins and by disaggregating proteins, also in an autonomous, DnaK-independent fashion. Unfolded proteins bind initially to DnaJ; upon interaction with the DnaJ-bound protein, DnaK hydrolyzes its bound ATP, resulting in the formation of a stable complex. GrpE releases ADP from DnaK; ATP binding to DnaK triggers the release of the substrate protein, thus completing the reaction cycle. Several rounds of ATP-dependent interactions between DnaJ, DnaK and GrpE are required for fully efficient folding. Also involved, together with DnaK and GrpE, in the DNA replication of plasmids through activation of initiation proteins. The protein is Chaperone protein DnaJ of Nitratiruptor sp. (strain SB155-2).